A 343-amino-acid polypeptide reads, in one-letter code: Glyceraldehyde-3-phosphate dehydrogenase 1 (343 aa).

NAD(+) contacts are provided by residues Arg-13 to Ile-14, Asp-35, Arg-79, and Ser-121. Residues Ser-154–Thr-156, Thr-185, Thr-214–Gly-215, and Arg-237 each bind D-glyceraldehyde 3-phosphate. Cys-155 serves as the catalytic Nucleophile. Asn-319 lines the NAD(+) pocket.

The protein belongs to the glyceraldehyde-3-phosphate dehydrogenase family. In terms of assembly, homotetramer.

It localises to the cytoplasm. It catalyses the reaction D-glyceraldehyde 3-phosphate + phosphate + NAD(+) = (2R)-3-phospho-glyceroyl phosphate + NADH + H(+). It functions in the pathway carbohydrate degradation; glycolysis; pyruvate from D-glyceraldehyde 3-phosphate: step 1/5. Functionally, catalyzes the oxidative phosphorylation of glyceraldehyde 3-phosphate (G3P) to 1,3-bisphosphoglycerate (BPG) using the cofactor NAD. The first reaction step involves the formation of a hemiacetal intermediate between G3P and a cysteine residue, and this hemiacetal intermediate is then oxidized to a thioester, with concomitant reduction of NAD to NADH. The reduced NADH is then exchanged with the second NAD, and the thioester is attacked by a nucleophilic inorganic phosphate to produce BPG. This is Glyceraldehyde-3-phosphate dehydrogenase 1 (gap1) from Nostoc sp. (strain PCC 7120 / SAG 25.82 / UTEX 2576).